Consider the following 334-residue polypeptide: Dihydroorotate dehydrogenase (quinone) (334 aa).

Residues 59 to 63 (AGLDK) and T83 contribute to the FMN site. K63 provides a ligand contact to substrate. Substrate is bound at residue 108–112 (NRMGF). N136 and N169 together coordinate FMN. N169 is a substrate binding site. S172 (nucleophile) is an active-site residue. Residue N174 participates in substrate binding. FMN is bound by residues K214 and T242. 243–244 (NT) contacts substrate. Residues G265, G294, and 315-316 (YS) contribute to the FMN site.

This sequence belongs to the dihydroorotate dehydrogenase family. Type 2 subfamily. In terms of assembly, monomer. FMN is required as a cofactor.

It is found in the cell membrane. It catalyses the reaction (S)-dihydroorotate + a quinone = orotate + a quinol. It functions in the pathway pyrimidine metabolism; UMP biosynthesis via de novo pathway; orotate from (S)-dihydroorotate (quinone route): step 1/1. Catalyzes the conversion of dihydroorotate to orotate with quinone as electron acceptor. This is Dihydroorotate dehydrogenase (quinone) from Acinetobacter baumannii (strain SDF).